A 416-amino-acid polypeptide reads, in one-letter code: tRNA (guanine-N(7)-)-methyltransferase non-catalytic subunit wuho (416 aa).

The segment at 47-88 is disordered; sequence TQSQESCPATATSTTAGKEPGGKEQQLAKQPEEGGTSASGSV. The span at 49 to 62 shows a compositional bias: polar residues; that stretch reads SQESCPATATSTTA. 4 WD repeats span residues 89–130, 177–216, 220–258, and 317–357; these read ATST…ARLL, GHLS…DIHS, GHRE…ELLQ, and AGSW…PTTN.

This sequence belongs to the WD repeat TRM82 family. As to quaternary structure, forms a heterodimer with the catalytic subunit Mettl1. Interacts with mei-P26 and weakly interacts with bgcn; required for the function or formation of the mei-P26-bgcn-bam-sxl complex. Interacts with nanos; may be involved in mei-P26-dependent derepression of the BMP signaling pathway. Interacts with Myc; the interaction may be mediated by mei-P26 and may be involved in the regulation of ribosome biogenesis. In terms of tissue distribution, in testis, it is present at high level in hub cells, a niche for germline stem cells of testis. Ubiquitously expressed in all testicular cells throughout spermatogenesis. Ubiquitously expressed in all germline and somatic cells of the ovary.

The protein localises to the nucleus. The protein resides in the cytoplasm. Its pathway is tRNA modification; N(7)-methylguanine-tRNA biosynthesis. Required for the Mettl1-dependent formation of N(7)-methylguanine at position 46 (m7G46) in tRNA. In the Mettl1-wuho methyltransferase complex, it is required to stabilize and induce conformational changes of the catalytic subunit. Required for binding of nanos mRNA and repression of translation by the mei-P26-bgcn-bam-sxl complex. May cooperate with mei-P26 and nanos to derepress the BMP signaling pathway. May cooperate with mei-P26 to suppress expression of a subset of microRNAs. May cooperate with mei-P26 to regulate bam expression levels in germline cells during gametogenesis. Required to promote mitosis to meiosis transition during gametogenesis. May regulate germline cell division in part by regulating ribosome biogenesis. In Drosophila erecta (Fruit fly), this protein is tRNA (guanine-N(7)-)-methyltransferase non-catalytic subunit wuho.